The following is a 377-amino-acid chain: MMAAQPTANPGVRLGWKAPGALASPPRLALSRSAAAPLASHRVGRGKFSAAAITTDDYLPMRSTEVKNRTSVDGIKSLRLITAVKTPYLPDGRFDLEAYDSLINTQINGGAEGVIVGGTTGEGHLMSWDEHIMLIGHTVNCFGTNIKVIGNTGSNSTREAIHASEQGFAVGMHAALHVNPYYGKTSTAGLISHFDEVLPMGPTIIYNVPSRTGQDIPPAVIEALSTYPNMAGVKECVGHERVKCYTDKGITIWSGNDDECHDSRWKYGATGVISVTSNLVPGLMRSLMFEGENAALNEKLLPLMKWLFSEPNPIGLNTALAQLGVVRPVFRRPYAPLSLEKRTEFVRIVEAIGRENFVGQKEVRVLDDDDFVLISRY.

Residues 1–51 (MMAAQPTANPGVRLGWKAPGALASPPRLALSRSAAAPLASHRVGRGKFSAA) constitute a chloroplast transit peptide. A pyruvate-binding site is contributed by Thr120. Tyr206 acts as the Proton donor/acceptor in catalysis. Lys234 acts as the Schiff-base intermediate with substrate in catalysis. Ile273 serves as a coordination point for pyruvate.

This sequence belongs to the DapA family. In terms of assembly, tetramer of modified subunits derived from two genes in different combinations.

The protein localises to the plastid. Its subcellular location is the chloroplast. It carries out the reaction L-aspartate 4-semialdehyde + pyruvate = (2S,4S)-4-hydroxy-2,3,4,5-tetrahydrodipicolinate + H2O + H(+). It participates in amino-acid biosynthesis; L-lysine biosynthesis via DAP pathway; (S)-tetrahydrodipicolinate from L-aspartate: step 3/4. Its activity is regulated as follows. Sensitive to lysine inhibition. This inhibition increase in an allosteric manner with increasing concentration of the inhibitor. Its function is as follows. Catalyzes the condensation of (S)-aspartate-beta-semialdehyde [(S)-ASA] and pyruvate to 4-hydroxy-tetrahydrodipicolinate (HTPA). The chain is 4-hydroxy-tetrahydrodipicolinate synthase 2, chloroplastic from Triticum aestivum (Wheat).